Reading from the N-terminus, the 684-residue chain is TBC1 domain family member 23 (684 aa).

The 182-residue stretch at 44-225 folds into the Rab-GAP TBC domain; it reads PLPAELRAKV…AIWDGYLQQA (182 aa). Ser300 is modified (phosphoserine). Residues 334 to 446 enclose the Rhodanese domain; that stretch reads EGVRFFVVDC…LQQHLADINV (113 aa). Phosphoserine occurs at positions 469, 474, and 507. Thr514 bears the Phosphothreonine mark. Residues 514–558 are may mediate the interaction with C17orf75, FAM91A1 and WDR11; that stretch reads TPVDRHVSSSDRVGKPYRGVKPVFSIGDEEEYDTDEIDSSSMSDD. Residues 514–684 are may mediate the interaction with WASHC1; sequence TPVDRHVSSS…IMKVLDALES (171 aa). Ser556 bears the Phosphoserine mark. The may mediate the interaction with FKBP15 and WASHC2; required for endosome to Golgi trafficking stretch occupies residues 559-684; the sequence is DRKEVVNIQT…IMKVLDALES (126 aa).

Directly interacts with GOLGA1 and GOLGA4. Interacts with FAM91A1, C17ORF75 and WDR11; the interaction recruits TBC1D23 to AP-1-derived vesicles. Directly interacts with WASHC1 and WASHC2/FAM21. Interacts with FKBP15.

The protein localises to the golgi apparatus. It localises to the trans-Golgi network. Its subcellular location is the cytoplasmic vesicle. Functionally, putative Rab GTPase-activating protein which plays a role in vesicular trafficking. Involved in endosome-to-Golgi trafficking. Acts as a bridging protein by binding simultaneously to golgins, including GOLGA1 and GOLGA4, located at the trans-Golgi, and to the WASH complex, located on endosome-derived vesicles. Together with WDR11 complex facilitates the golgin-mediated capture of vesicles generated using AP-1. Plays a role in brain development, including in cortical neuron positioning. May also be important for neurite outgrowth, possibly through its involvement in membrane trafficking and cargo delivery, 2 processes which are essential for axonal and dendritic growth. May act as a general inhibitor of innate immunity signaling, strongly inhibiting multiple TLR and dectin/CLEC7A-signaling pathways. Does not alter initial activation events, but instead affects maintenance of inflammatory gene expression several hours after bacterial lipopolysaccharide (LPS) challenge. This is TBC1 domain family member 23 (Tbc1d23) from Mus musculus (Mouse).